The following is a 320-amino-acid chain: uncharacterized protein (320 aa).

Arg61 is subject to Omega-N-methylarginine. The disordered stretch occupies residues 299–320 (LHLQHQKQTSKDAGRQTPERKA). The span at 307-320 (TSKDAGRQTPERKA) shows a compositional bias: basic and acidic residues. A Phosphothreonine modification is found at Thr315.

This is an uncharacterized protein from Mus musculus (Mouse).